A 264-amino-acid chain; its full sequence is Synaptophysin-like protein 2 (264 aa).

Residues methionine 1 to glutamate 33 lie on the Cytoplasmic side of the membrane. An MARVEL domain is found at arginine 30–proline 238. A helical membrane pass occupies residues proline 34 to glycine 54. At serine 55 to glutamate 116 the chain is on the vesicular side. The helical transmembrane segment at phenylalanine 117–leucine 137 threads the bilayer. The Cytoplasmic segment spans residues arginine 138–proline 150. Residues leucine 151–tryptophan 171 traverse the membrane as a helical segment. Over glycine 172–asparagine 213 the chain is Vesicular. Asparagine 213 carries an N-linked (GlcNAc...) asparagine glycan. Residues leucine 214–phenylalanine 234 form a helical membrane-spanning segment. The Cytoplasmic portion of the chain corresponds to lysine 235–glutamine 264. The tract at residues glutamine 242–glutamine 264 is disordered.

Belongs to the synaptophysin/synaptobrevin family. In terms of tissue distribution, expressed abundantly in skeletal muscle and at lower levels in the kidney.

The protein resides in the membrane. In terms of biological role, involved in communication between the T-tubular and junctional sarcoplasmic reticulum (SR) membranes. This Mus musculus (Mouse) protein is Synaptophysin-like protein 2 (Sypl2).